The following is a 719-amino-acid chain: 1,4-alpha-glucan branching enzyme GlgB (719 aa).

Aspartate 400 acts as the Nucleophile in catalysis. Glutamate 453 (proton donor) is an active-site residue.

It belongs to the glycosyl hydrolase 13 family. GlgB subfamily. As to quaternary structure, monomer.

The catalysed reaction is Transfers a segment of a (1-&gt;4)-alpha-D-glucan chain to a primary hydroxy group in a similar glucan chain.. It participates in glycan biosynthesis; glycogen biosynthesis. Its function is as follows. Catalyzes the formation of the alpha-1,6-glucosidic linkages in glycogen by scission of a 1,4-alpha-linked oligosaccharide from growing alpha-1,4-glucan chains and the subsequent attachment of the oligosaccharide to the alpha-1,6 position. The protein is 1,4-alpha-glucan branching enzyme GlgB of Chlamydia caviae (strain ATCC VR-813 / DSM 19441 / 03DC25 / GPIC) (Chlamydophila caviae).